The sequence spans 687 residues: Polyphosphate kinase (687 aa).

N45 contacts ATP. The Mg(2+) site is built by R375 and R405. H435 (phosphohistidine intermediate) is an active-site residue. ATP contacts are provided by Y472, R568, and H596.

The protein belongs to the polyphosphate kinase 1 (PPK1) family. Requires Mg(2+) as cofactor. In terms of processing, an intermediate of this reaction is the autophosphorylated ppk in which a phosphate is covalently linked to a histidine residue through a N-P bond.

It carries out the reaction [phosphate](n) + ATP = [phosphate](n+1) + ADP. Its function is as follows. Catalyzes the reversible transfer of the terminal phosphate of ATP to form a long-chain polyphosphate (polyP). This chain is Polyphosphate kinase, found in Burkholderia lata (strain ATCC 17760 / DSM 23089 / LMG 22485 / NCIMB 9086 / R18194 / 383).